Here is a 760-residue protein sequence, read N- to C-terminus: General transcription and DNA repair factor IIH helicase subunit XPD (760 aa).

One can recognise a Helicase ATP-binding domain in the interval 7–283 (GLLVYFPYDY…KETDEQRLRD (277 aa)). 42–49 (MPSGTGKT) provides a ligand contact to ATP. 4 residues coordinate [4Fe-4S] cluster: C116, C134, C155, and C190. Residues 234–237 (DEAH) carry the DEAH box motif. The interval 438–637 (MDASLAIKPV…TQSRILKARL (200 aa)) is mediates interaction with MMS19.

This sequence belongs to the helicase family. RAD3/XPD subfamily. In terms of assembly, component of the 7-subunit TFIIH core complex composed of XPB/ERCC3, XPD/ERCC2, GTF2H1, GTF2H2, GTF2H3, GTF2H4 and GTF2H5, which is active in NER. The core complex associates with the 3-subunit CDK-activating kinase (CAK) module composed of CCNH/cyclin H, CDK7 and MNAT1 to form the 10-subunit holoenzyme (holo-TFIIH) active in transcription. The interaction with GTF2H2 results in the stimulation of the 5'--&gt;3' helicase activity. Component of the MMXD complex, which includes CIAO1, ERCC2, CIAO2B, MMS19 and SLC25A5. Interacts with CIAO1 and CIAO2B; the interaction WITH CIAO2B is direct. Interacts with ATF7IP. Interacts directly with MMS19. Part of TBP-based Pol II pre-initiation complex (PIC), in which Pol II core assembles with general transcription factors and other specific initiation factors including GTF2E1, GTF2E2, GTF2F1, GTF2F2, TCEA1, ERCC2, ERCC3, GTF2H2, GTF2H3, GTF2H4, GTF2H5, GTF2A1, GTF2A2, GTF2B and TBP; this large multi-subunit PIC complex mediates DNA unwinding and targets Pol II core to the transcription start site where the first phosphodiester bond forms. Mg(2+) serves as cofactor. [4Fe-4S] cluster is required as a cofactor. Post-translationally, ISGylated.

It localises to the nucleus. It is found in the cytoplasm. Its subcellular location is the cytoskeleton. The protein resides in the spindle. It catalyses the reaction Couples ATP hydrolysis with the unwinding of duplex DNA at the replication fork by translocating in the 5'-3' direction. This creates two antiparallel DNA single strands (ssDNA). The leading ssDNA polymer is the template for DNA polymerase III holoenzyme which synthesizes a continuous strand.. It carries out the reaction ATP + H2O = ADP + phosphate + H(+). Functionally, ATP-dependent 5'-3' DNA helicase, component of the general transcription and DNA repair factor IIH (TFIIH) core complex, which is involved in general and transcription-coupled nucleotide excision repair (NER) of damaged DNA and, when complexed to CDK-activating kinase (CAK), involved in transcription by RNA polymerase II. In NER, TFIIH acts by opening DNA around the lesion to allow the excision of the damaged oligonucleotide and its replacement by a new DNA fragment. The ATP-dependent helicase activity of XPD/ERCC2 is required for DNA opening. In transcription, TFIIH has an essential role in transcription initiation. When the pre-initiation complex (PIC) has been established, TFIIH is required for promoter opening and promoter escape. Phosphorylation of the C-terminal tail (CTD) of the largest subunit of RNA polymerase II by the kinase module CAK controls the initiation of transcription. XPD/ERCC2 acts by forming a bridge between CAK and the core-TFIIH complex. Involved in the regulation of vitamin-D receptor activity. As part of the mitotic spindle-associated MMXD complex it plays a role in chromosome segregation. Might have a role in aging process and could play a causative role in the generation of skin cancers. The protein is General transcription and DNA repair factor IIH helicase subunit XPD (Ercc2) of Mus musculus (Mouse).